The sequence spans 369 residues: Protein-glutamate methylesterase/protein-glutamine glutaminase (369 aa).

In terms of domain architecture, Response regulatory spans 6-122 (RAVVADDSHF…SMEMSRLKDQ (117 aa)). Asp56 carries the 4-aspartylphosphate modification. Residues 136–178 (GATGSRSGTGSDSGTAPTTAGGSATDRRGTGGSSGQTTYVANP) form a disordered region. Residues 138-159 (TGSRSGTGSDSGTAPTTAGGSA) are compositionally biased toward low complexity. The 195-residue stretch at 173–367 (TYVANPTLVI…DGVIDTITTE (195 aa)) folds into the CheB-type methylesterase domain. Active-site residues include Ser185, His212, and Asp309.

Belongs to the CheB family. Post-translationally, phosphorylated by CheA. Phosphorylation of the N-terminal regulatory domain activates the methylesterase activity.

Its subcellular location is the cytoplasm. The enzyme catalyses [protein]-L-glutamate 5-O-methyl ester + H2O = L-glutamyl-[protein] + methanol + H(+). It catalyses the reaction L-glutaminyl-[protein] + H2O = L-glutamyl-[protein] + NH4(+). In terms of biological role, involved in chemotaxis. Part of a chemotaxis signal transduction system that modulates chemotaxis in response to various stimuli. Catalyzes the demethylation of specific methylglutamate residues introduced into the chemoreceptors (methyl-accepting chemotaxis proteins or MCP) by CheR. Also mediates the irreversible deamidation of specific glutamine residues to glutamic acid. The sequence is that of Protein-glutamate methylesterase/protein-glutamine glutaminase from Haloarcula marismortui (strain ATCC 43049 / DSM 3752 / JCM 8966 / VKM B-1809) (Halobacterium marismortui).